The following is a 146-amino-acid chain: L-fucose mutarotase (146 aa).

Residue His-22 is the Proton donor of the active site. Substrate is bound by residues Asp-30, Arg-109, and 131 to 133; that span reads YGN.

It belongs to the RbsD / FucU family. FucU mutarotase subfamily. Homodecamer.

The protein resides in the cytoplasm. The catalysed reaction is alpha-L-fucose = beta-L-fucose. The protein operates within carbohydrate metabolism; L-fucose metabolism. Functionally, involved in the anomeric conversion of L-fucose. This Glaesserella parasuis serovar 5 (strain SH0165) (Haemophilus parasuis) protein is L-fucose mutarotase.